The sequence spans 361 residues: Cytosolic Fe-S cluster assembly factor CFD1 (361 aa).

37 to 44 (GKGGVGKS) contributes to the ATP binding site. [4Fe-4S] cluster is bound by residues C218 and C221. Residues 293–314 (HSQSAAAQLPNSGDTESLTPAG) form a disordered region.

It belongs to the Mrp/NBP35 ATP-binding proteins family. NUBP2/CFD1 subfamily. In terms of assembly, heterotetramer of 2 NBP35 and 2 CFD1 chains. Requires [4Fe-4S] cluster as cofactor.

The protein resides in the cytoplasm. Functionally, component of the cytosolic iron-sulfur (Fe/S) protein assembly (CIA) machinery. Required for maturation of extramitochondrial Fe-S proteins. The NBP35-CFD1 heterotetramer forms a Fe-S scaffold complex, mediating the de novo assembly of an Fe-S cluster and its transfer to target apoproteins. The sequence is that of Cytosolic Fe-S cluster assembly factor CFD1 from Mycosarcoma maydis (Corn smut fungus).